Consider the following 100-residue polypeptide: Large ribosomal subunit protein uL23 (100 aa).

Belongs to the universal ribosomal protein uL23 family. Part of the 50S ribosomal subunit. Contacts protein L29, and trigger factor when it is bound to the ribosome.

In terms of biological role, one of the early assembly proteins it binds 23S rRNA. One of the proteins that surrounds the polypeptide exit tunnel on the outside of the ribosome. Forms the main docking site for trigger factor binding to the ribosome. This Synechococcus sp. (strain CC9311) protein is Large ribosomal subunit protein uL23.